Consider the following 321-residue polypeptide: Probable protein phosphatase methylesterase 1 (321 aa).

Catalysis depends on residues serine 170, aspartate 195, and histidine 307.

The protein belongs to the AB hydrolase superfamily.

It catalyses the reaction [phosphatase 2A protein]-C-terminal L-leucine methyl ester + H2O = [phosphatase 2A protein]-C-terminal L-leucine + methanol + H(+). Demethylates proteins that have been reversibly carboxymethylated. In Dictyostelium discoideum (Social amoeba), this protein is Probable protein phosphatase methylesterase 1 (ppme1).